Reading from the N-terminus, the 59-residue chain is uncharacterized protein (59 aa).

A helical membrane pass occupies residues 6–26; it reads WWLVVFAVFVFLFDTLLMQWI.

It is found in the membrane. This is an uncharacterized protein from Escherichia coli O157:H7.